Consider the following 379-residue polypeptide: Homoserine O-succinyltransferase (379 aa).

Residues 51–360 (NAVLICHALS…DAPQGHDAFL (310 aa)) enclose the AB hydrolase-1 domain. S157 serves as the catalytic Nucleophile. R227 is a binding site for substrate. Active-site residues include D323 and H356. Residue D357 participates in substrate binding.

The protein belongs to the AB hydrolase superfamily. MetX family. In terms of assembly, homodimer.

Its subcellular location is the cytoplasm. It carries out the reaction L-homoserine + succinyl-CoA = O-succinyl-L-homoserine + CoA. The protein operates within amino-acid biosynthesis; L-methionine biosynthesis via de novo pathway; O-succinyl-L-homoserine from L-homoserine: step 1/1. Transfers a succinyl group from succinyl-CoA to L-homoserine, forming succinyl-L-homoserine. The chain is Homoserine O-succinyltransferase from Pseudomonas aeruginosa (strain LESB58).